The following is a 243-amino-acid chain: MRTRVIVNGANGKMGILACETLENHEQFEVVAKLSRQDNLGQSILDTKAQIVVDLTRADCVYENSLTIINHGARPVIGTSGLVETQIDELTKLCEIKQIGGIIAPNFSLGAILMMMLATKASEYFSEVEIIEGHHQQKLDAPSGTALKTAEMIAAARKKPKNKLPLKELTPGARGGSHHDINIHSLRLPGLLARQEVLFGNIGETLSITHNSIDRHCFMPGIVLACQKVLNLTNLVYGLEHLL.

NAD(+) contacts are provided by residues 9-14, 78-80, and 104-107; these read GANGKM, GTS, and APNF. The Proton donor/acceptor role is filled by histidine 134. Histidine 135 contacts (S)-2,3,4,5-tetrahydrodipicolinate. Catalysis depends on lysine 138, which acts as the Proton donor. 144–145 is a (S)-2,3,4,5-tetrahydrodipicolinate binding site; it reads GT.

It belongs to the DapB family.

It localises to the cytoplasm. It carries out the reaction (S)-2,3,4,5-tetrahydrodipicolinate + NAD(+) + H2O = (2S,4S)-4-hydroxy-2,3,4,5-tetrahydrodipicolinate + NADH + H(+). It catalyses the reaction (S)-2,3,4,5-tetrahydrodipicolinate + NADP(+) + H2O = (2S,4S)-4-hydroxy-2,3,4,5-tetrahydrodipicolinate + NADPH + H(+). The protein operates within amino-acid biosynthesis; L-lysine biosynthesis via DAP pathway; (S)-tetrahydrodipicolinate from L-aspartate: step 4/4. Its function is as follows. Catalyzes the conversion of 4-hydroxy-tetrahydrodipicolinate (HTPA) to tetrahydrodipicolinate. This Legionella pneumophila (strain Corby) protein is 4-hydroxy-tetrahydrodipicolinate reductase.